The following is a 368-amino-acid chain: Xaa-Pro dipeptidase (368 aa).

Residues Asp223, Asp234, His298, Glu327, and Glu341 each coordinate Mn(2+).

This sequence belongs to the peptidase M24B family. Requires Mn(2+) as cofactor.

It is found in the cytoplasm. The catalysed reaction is Xaa-L-Pro dipeptide + H2O = an L-alpha-amino acid + L-proline. This is Xaa-Pro dipeptidase (pepQ) from Lactobacillus delbrueckii subsp. lactis.